The primary structure comprises 96 residues: Small ribosomal subunit protein bS6 (96 aa).

This sequence belongs to the bacterial ribosomal protein bS6 family.

Binds together with bS18 to 16S ribosomal RNA. The sequence is that of Small ribosomal subunit protein bS6 from Streptococcus pyogenes serotype M1.